A 264-amino-acid polypeptide reads, in one-letter code: Teichoic acids export ATP-binding protein TagH (264 aa).

The ABC transporter domain occupies 5–243 (VNIKNVTKEY…YEAFLNDFKK (239 aa)). ATP is bound at residue 57-64 (GINGSGKS).

Belongs to the ABC transporter superfamily. Teichoic acids exporter (TC 3.A.1.104.1) family. The complex is composed of two ATP-binding proteins (TagH) and two transmembrane proteins (TagG).

The protein localises to the cell membrane. The catalysed reaction is ATP + H2O + teichoic acidSide 1 = ADP + phosphate + teichoic acidSide 2.. Its function is as follows. Part of the ABC transporter complex TagGH involved in teichoic acids export. Responsible for energy coupling to the transport system. This is Teichoic acids export ATP-binding protein TagH from Staphylococcus aureus (strain Mu50 / ATCC 700699).